Consider the following 367-residue polypeptide: NADH-quinone oxidoreductase subunit D (367 aa).

This sequence belongs to the complex I 49 kDa subunit family. NDH-1 is composed of 14 different subunits. Subunits NuoB, C, D, E, F, and G constitute the peripheral sector of the complex.

The protein resides in the cell membrane. It catalyses the reaction a quinone + NADH + 5 H(+)(in) = a quinol + NAD(+) + 4 H(+)(out). Its function is as follows. NDH-1 shuttles electrons from NADH, via FMN and iron-sulfur (Fe-S) centers, to quinones in the respiratory chain. The immediate electron acceptor for the enzyme in this species is believed to be ubiquinone. Couples the redox reaction to proton translocation (for every two electrons transferred, four hydrogen ions are translocated across the cytoplasmic membrane), and thus conserves the redox energy in a proton gradient. The sequence is that of NADH-quinone oxidoreductase subunit D from Dehalococcoides mccartyi (strain ATCC BAA-2266 / KCTC 15142 / 195) (Dehalococcoides ethenogenes (strain 195)).